Here is a 628-residue protein sequence, read N- to C-terminus: MAILPLLLCLLPLAPASSPPQSATPSPCPRRCRCQTQSLPLSVLCPGAGLLFVPPSLDRRAAELRLADNFIASVRRRDLANMTGLLHLSLSRNTIRHVAAGAFADLRALRALHLDGNRLTSLGEGQLRGLVNLRHLILSNNQLAALAAGALDDCAETLEDLDLSYNNLEQLPWEALGRLGNVNTLGLDHNLLASVPAGAFSRLHKLARLDMTSNRLTTIPPDPLFSRLPLLARPRGSPASALVLAFGGNPLHCNCELVWLRRLAREDDLEACASPPALGGRYFWAVGEEEFVCEPPVVTHRSPPLAVPAGRPAALRCRAVGDPEPRVRWVSPQGRLLGNSSRARAFPNGTLELLVTEPGDGGIFTCIAANAAGEATAAVELTVGPPPPPQLANSTSCDPPRDGDPDALTPPSAASASAKVADTGPPTDRGVQVTEHGATAALVQWPDQRPIPGIRMYQIQYNSSADDILVYRMIPAESRSFLLTDLASGRTYDLCVLAVYEDSATGLTATRPVGCARFSTEPALRPCGAPHAPFLGGTMIIALGGVIVASVLVFIFVLLMRYKVHGGQPPGKAKIPAPVSSVCSQTNGALGPTPTPAPPAPEPAALRAHTVVQLDCEPWGPGHEPVGP.

Residues 1–16 (MAILPLLLCLLPLAPA) form the signal peptide. Residues 17–539 (SSPPQSATPS…PHAPFLGGTM (523 aa)) are Extracellular-facing. Residues 19 to 59 (PPQSATPSPCPRRCRCQTQSLPLSVLCPGAGLLFVPPSLDR) enclose the LRRNT domain. LRR repeat units lie at residues 60-83 (RAAE…ANMT), 84-105 (GLLH…AFAD), 108-129 (ALRA…QLRG), 132-153 (NLRH…ALDD), 157-178 (TLED…ALGR), 181-202 (NVNT…AFSR), and 205-226 (KLAR…PLFS). Asn81 is a glycosylation site (N-linked (GlcNAc...) asparagine). One can recognise an LRRCT domain in the interval 249 to 295 (NPLHCNCELVWLRRLAREDDLEACASPPALGGRYFWAVGEEEFVCEP). One can recognise an Ig-like domain in the interval 295-382 (PPVVTHRSPP…GEATAAVELT (88 aa)). Residues Cys317 and Cys366 are joined by a disulfide bond. Residues Asn339, Asn348, and Asn393 are each glycosylated (N-linked (GlcNAc...) asparagine). Positions 382–430 (TVGPPPPPQLANSTSCDPPRDGDPDALTPPSAASASAKVADTGPPTDRG) are disordered. The span at 406 to 422 (DALTPPSAASASAKVAD) shows a compositional bias: low complexity. Residues 425–523 (PPTDRGVQVT…GCARFSTEPA (99 aa)) enclose the Fibronectin type-III domain. N-linked (GlcNAc...) asparagine glycosylation is present at Asn462. The chain crosses the membrane as a helical span at residues 540–560 (IIALGGVIVASVLVFIFVLLM). Over 561–628 (RYKVHGGQPP…WGPGHEPVGP (68 aa)) the chain is Cytoplasmic.

Belongs to the LRFN family. Can form heteromeric complexes with LRFN1, LRFN2, LRFN4 and LRFN5. Able to form homomeric complexes across cell junctions, between adjacent cells. Does not interact with DLG4. Post-translationally, N-glycosylated.

The protein resides in the cell membrane. The protein localises to the cell projection. It localises to the axon. Its subcellular location is the dendrite. It is found in the synapse. The protein resides in the presynaptic cell membrane. The protein localises to the postsynaptic cell membrane. Cell adhesion molecule that mediates homophilic cell-cell adhesion in a Ca(2+)-independent manner. Promotes neurite outgrowth in hippocampal neurons. This chain is Leucine-rich repeat and fibronectin type-III domain-containing protein 3 (LRFN3), found in Homo sapiens (Human).